A 98-amino-acid chain; its full sequence is Integration host factor subunit alpha (98 aa).

Residues 49-70 (FGNFDLRDKNQRPGRNPKTGED) are disordered.

Belongs to the bacterial histone-like protein family. In terms of assembly, heterodimer of an alpha and a beta chain.

Functionally, this protein is one of the two subunits of integration host factor, a specific DNA-binding protein that functions in genetic recombination as well as in transcriptional and translational control. This Sodalis glossinidius (strain morsitans) protein is Integration host factor subunit alpha.